Here is a 98-residue protein sequence, read N- to C-terminus: Beta-elicitin cinnamomin (98 aa).

Cystine bridges form between cysteine 3/cysteine 71, cysteine 27/cysteine 56, and cysteine 51/cysteine 95. Positions 33-42 (YSMLTATALP) match the Beak-like motif 1 (ligand binding) motif. The short motif at 72 to 83 (DLTVPTSGLVLD) is the Beak-like motif 2 (ligand binding) element.

The protein belongs to the elicitin family.

Its subcellular location is the secreted. Its function is as follows. Induces local and distal defense responses (incompatible hypersensitive reaction) in plants from the solanaceae and cruciferae families. Elicits leaf necrosis and causes the accumulation of pathogenesis-related proteins. Might interact with the lipidic molecules of the plasma membrane. Elicitins are able to load, carry, and transfer sterols between membranes. The polypeptide is Beta-elicitin cinnamomin (Phytophthora cinnamomi (Cinnamon fungus)).